Reading from the N-terminus, the 146-residue chain is Putative pre-16S rRNA nuclease (146 aa).

This sequence belongs to the YqgF nuclease family.

It is found in the cytoplasm. Its function is as follows. Could be a nuclease involved in processing of the 5'-end of pre-16S rRNA. This chain is Putative pre-16S rRNA nuclease, found in Methylobacillus flagellatus (strain ATCC 51484 / DSM 6875 / VKM B-1610 / KT).